The sequence spans 509 residues: MYCTLRFPLPLHIPQTRTMTSCQPKRRRVEHLRCSAQPSSIREDDEDADDRRVGVERRISIVVERYGNGTSKRYFLDDDDSPLQGILEERETKPDNNSQSSNSSETNILWLPDVVRDFVFPSGFPGSVSDDYLDYMLWQFPTNITGWICNVLVTSSLLKAVGVGSFSGTSAAATAAASAAAIRWVSKDGIGALGRLLIGGRFGSLFDDDPKQWRMYADFIGSAGSFFDLATQLYPSQFLLLASTGNLAKAVARGLRDPSFRVIQNHFAISGNLGEVAAKEEVWEVAAQLIGLGFGILIIDTPGLVKSFPFVLLTWTSIRLVHLWLRYQSLAVLQFNTVNLKRARIIVESHVVHSVVPGYVDCNKRENILLWQRFMKPRIIFGVSLEELSGLEKSVSKVKALLKMYTKEKYILTLNKLNKDTEFSVSFKVNATSRDVLRCLWQAYWLEENMEESFKDKDSVFHWLKQSLSEMDNKFDDFLFKLDTAGWNLRESNLKVPNQVLIDQESIPF.

Residues 22 to 49 (CQPKRRRVEHLRCSAQPSSIREDDEDAD) are disordered.

The protein belongs to the RUS1 family.

In Arabidopsis thaliana (Mouse-ear cress), this protein is Protein root UVB sensitive 5.